A 173-amino-acid chain; its full sequence is Translationally-controlled tumor protein homolog (173 aa).

The 173-residue stretch at 1 to 173 (MIIFKDMITG…FKHGLEEEKV (173 aa)) folds into the TCTP domain.

The protein belongs to the TCTP family. As to expression, expressed by the venom gland.

It is found in the secreted. In terms of biological role, venom protein that causes edema, enhances vascular permeability and is likely related to the inflammatory activity of the venom. The polypeptide is Translationally-controlled tumor protein homolog (Grammostola rosea (Chilean rose tarantula)).